Consider the following 352-residue polypeptide: Quinolinate synthase (352 aa).

Iminosuccinate contacts are provided by histidine 48 and serine 69. [4Fe-4S] cluster is bound at residue cysteine 114. Iminosuccinate contacts are provided by residues tyrosine 140 to asparagine 142 and serine 157. Cysteine 201 provides a ligand contact to [4Fe-4S] cluster. Iminosuccinate-binding positions include histidine 227–glutamate 229 and threonine 244. Cysteine 298 provides a ligand contact to [4Fe-4S] cluster.

This sequence belongs to the quinolinate synthase family. Type 1 subfamily. It depends on [4Fe-4S] cluster as a cofactor.

The protein localises to the cytoplasm. The enzyme catalyses iminosuccinate + dihydroxyacetone phosphate = quinolinate + phosphate + 2 H2O + H(+). It participates in cofactor biosynthesis; NAD(+) biosynthesis; quinolinate from iminoaspartate: step 1/1. In terms of biological role, catalyzes the condensation of iminoaspartate with dihydroxyacetone phosphate to form quinolinate. The polypeptide is Quinolinate synthase (Pseudomonas putida (strain ATCC 700007 / DSM 6899 / JCM 31910 / BCRC 17059 / LMG 24140 / F1)).